The chain runs to 218 residues: Ras-related protein Rab-4A (218 aa).

Residues Gly23, Thr24, Gly25, Lys26, Ser27, Cys28, Ser42, His44, and Thr45 each coordinate GTP. Mg(2+) is bound at residue Ser27. Residues 44–49 (HTIGVE) carry the Switch 1 motif. The Mg(2+) site is built by Thr45 and Asp68. Positions 70-79 (AGQERFRSVT) match the Switch 2 motif. Residue Gly71 coordinates GTP. Gln72 is subject to 5-glutamyl serotonin. Asn126, Lys127, Asp129, Ala157, and Leu158 together coordinate GTP. Ser190 is modified (phosphoserine). Ser204 carries the post-translational modification Phosphoserine; by CDK1. S-geranylgeranyl cysteine attachment occurs at residues Cys216 and Cys218. Cys218 is modified (cysteine methyl ester).

This sequence belongs to the small GTPase superfamily. Rab family. As to quaternary structure, interacts with RAB11FIP1, RABEP1, ZFYVE20 and RUFY1. Interacts with SGSM1, SGSM2 and SGSM3. Interacts (membrane-bound form) with NDRG1; the interaction involves NDRG1 in vesicular recycling of E-cadherin. Interacts (in GTP-bound form) with GRIPAP1. Interacts with RABEP1 and RBSN. Does not interact with HPS4. The cofactor is Mg(2+). Post-translationally, serotonylation of Gln-72 by TGM2 during activation and aggregation of platelets leads to constitutive activation of GTPase activity. In terms of processing, phosphorylated by CDK1 kinase during mitosis.

Its subcellular location is the membrane. The protein resides in the cytoplasm. It localises to the early endosome membrane. It is found in the recycling endosome membrane. It carries out the reaction GTP + H2O = GDP + phosphate + H(+). With respect to regulation, regulated by guanine nucleotide exchange factors (GEFs) which promote the exchange of bound GDP for free GTP. Regulated by GTPase activating proteins (GAPs) which increase the GTP hydrolysis activity. Inhibited by GDP dissociation inhibitors (GDIs). Its function is as follows. The small GTPases Rab are key regulators of intracellular membrane trafficking, from the formation of transport vesicles to their fusion with membranes. Rabs cycle between an inactive GDP-bound form and an active GTP-bound form that is able to recruit to membranes different sets of downstream effectors directly responsible for vesicle formation, movement, tethering and fusion. RAB4A is involved in protein transport. Also plays a role in vesicular traffic. Mediates VEGFR2 endosomal trafficking to enhance VEGFR2 signaling. Acts as a regulator of platelet alpha-granule release during activation and aggregation of platelets. The protein is Ras-related protein Rab-4A (RAB4A) of Bos taurus (Bovine).